The following is a 254-amino-acid chain: 3-deoxy-manno-octulosonate cytidylyltransferase (254 aa).

This sequence belongs to the KdsB family.

It localises to the cytoplasm. The catalysed reaction is 3-deoxy-alpha-D-manno-oct-2-ulosonate + CTP = CMP-3-deoxy-beta-D-manno-octulosonate + diphosphate. Its pathway is nucleotide-sugar biosynthesis; CMP-3-deoxy-D-manno-octulosonate biosynthesis; CMP-3-deoxy-D-manno-octulosonate from 3-deoxy-D-manno-octulosonate and CTP: step 1/1. The protein operates within bacterial outer membrane biogenesis; lipopolysaccharide biosynthesis. Its function is as follows. Activates KDO (a required 8-carbon sugar) for incorporation into bacterial lipopolysaccharide in Gram-negative bacteria. The protein is 3-deoxy-manno-octulosonate cytidylyltransferase of Pseudomonas syringae pv. syringae (strain B728a).